A 602-amino-acid polypeptide reads, in one-letter code: Cholinesterase (602 aa).

Positions 1–28 are cleaved as a signal peptide; the sequence is MHSKVTIICIRFLFWFLLLCMLIGKSHT. Residues Asn-45 and Asn-85 are each glycosylated (N-linked (GlcNAc...) (complex) asparagine). An intrachain disulfide couples Cys-93 to Cys-120. Trp-110 lines the tacrine pocket. A glycan (N-linked (GlcNAc...) (complex) asparagine) is linked at Asn-134. Substrate is bound at residue 144–145; the sequence is GG. The active-site Acyl-ester intermediate is Ser-226. Ser-226 is subject to Phosphoserine. N-linked (GlcNAc...) (complex) asparagine glycans are attached at residues Asn-269 and Asn-284. A disulfide bond links Cys-280 and Cys-291. Glu-353 serves as the catalytic Charge relay system. N-linked (GlcNAc...) (complex) asparagine glycosylation is present at Asn-369. Cys-428 and Cys-547 are joined by a disulfide. Position 466 (His-466) interacts with tacrine. The active-site Charge relay system is His-466. Asn-483 is a glycosylation site (N-linked (GlcNAc...) (complex) asparagine). Asn-509, Asn-513, and Asn-514 each carry an N-linked (GlcNAc...) asparagine glycan.

The protein belongs to the type-B carboxylesterase/lipase family. In terms of assembly, homotetramer; disulfide-linked. Dimer of dimers. Post-translationally, N-glycosylated. No other PTM detected. The major N-glycan structures are of the complex diantennary type with 1 and 2 N-acetylneuraminic acid molecules (Neu5Ac) making up approximately 33% and 47% of the total N-glycans, respectively. Only low amounts of fucosylated diantennary N-glycans are detected (approximately 2%). Triantennary N-glycans with or without fucose amount to approximately 13%, whereas 5% of the total N-glycans are of the oligomannosidic or hybrid type. In terms of tissue distribution, detected in blood plasma (at protein level). Present in most cells except erythrocytes.

It is found in the secreted. The catalysed reaction is an acylcholine + H2O = a carboxylate + choline + H(+). With respect to regulation, inhibited by mercury. Inhibited by Tabun. Tabun forms a covalent adduct with Ser-226 that becomes irreversible upon aging. Its function is as follows. Esterase with broad substrate specificity. Contributes to the inactivation of the neurotransmitter acetylcholine. Can degrade neurotoxic organophosphate esters. The sequence is that of Cholinesterase (BCHE) from Homo sapiens (Human).